A 259-amino-acid chain; its full sequence is Protein TILLER ANGLE CONTROL 1 (259 aa).

Residues 56–62 carry the IGT motif motif; sequence GILAIGT. Disordered stretches follow at residues 96–123, 206–226, and 239–259; these read EEKAEAKQDTPVTAPSEPASALEPAKMH, SCMEKMHHKKPTKPTSKPLKA, and GKKIHPEQLNGRSNAEGPVTA. Low complexity predominate over residues 109 to 119; that stretch reads APSEPASALEP.

Belongs to the TAC family. As to expression, expressed in the basal part of seedlings.

Functionally, involved in the regulation of tiller growth angle. Promotes horizontal shoot growth. TAC1 and LAZY1 play opposite functions in the regulation of tiller growth angle. The sequence is that of Protein TILLER ANGLE CONTROL 1 from Oryza sativa subsp. indica (Rice).